Consider the following 259-residue polypeptide: MMQKQNMIVVNQKEIAKNIYELVLQGTLVQQMNEPGQFVHIKVAEGIAPLLRRPISICNVDQEKNEFTMLYRAEGQGTKTLATRKQGEMVDVLGPLGHGFPVEEAEAGQTALLVGGGIGVSPLYELSQRLVAKGVRVIHILGFQTKDVVFYEEKFAELGDTYVATVDGTHGTKGFVTDVIDHYGIDFDILYSCGPLAMLRALEGRYKEKKAYISLEERMGCGIGACFACVCHLQEDPSGHSYKKVCSDGPVFPIGEVVL.

An FAD-binding FR-type domain is found at methionine 2–valine 102. FAD is bound by residues arginine 53 to serine 56, leucine 70 to arginine 72, and glycine 77 to threonine 78. [2Fe-2S] cluster contacts are provided by cysteine 221, cysteine 226, cysteine 229, and cysteine 246.

The protein belongs to the PyrK family. As to quaternary structure, heterotetramer of 2 PyrK and 2 PyrD type B subunits. [2Fe-2S] cluster is required as a cofactor. FAD serves as cofactor.

It participates in pyrimidine metabolism; UMP biosynthesis via de novo pathway; orotate from (S)-dihydroorotate (NAD(+) route): step 1/1. In terms of biological role, responsible for channeling the electrons from the oxidation of dihydroorotate from the FMN redox center in the PyrD type B subunit to the ultimate electron acceptor NAD(+). The sequence is that of Dihydroorotate dehydrogenase B (NAD(+)), electron transfer subunit from Bacillus cereus (strain Q1).